The following is a 297-amino-acid chain: GTPase Era (297 aa).

The Era-type G domain occupies 7–174; it reads RSGFVSIIGR…VEVVHGFIPA (168 aa). The interval 15–22 is G1; it reads GRPNVGKS. Residue 15 to 22 participates in GTP binding; it reads GRPNVGKS. Residues 41-45 form a G2 region; sequence QTTRN. A G3 region spans residues 62–65; it reads DTPG. Residues 62-66 and 124-127 contribute to the GTP site; these read DTPGI and NKID. Positions 124 to 127 are G4; it reads NKID. Residues 153 to 155 are G5; sequence VSA. The KH type-2 domain maps to 205 to 282; that stretch reads THDEVPYSVA…FLELFVRVSK (78 aa).

It belongs to the TRAFAC class TrmE-Era-EngA-EngB-Septin-like GTPase superfamily. Era GTPase family. Monomer.

It is found in the cytoplasm. The protein localises to the cell inner membrane. Its function is as follows. An essential GTPase that binds both GDP and GTP, with rapid nucleotide exchange. Plays a role in 16S rRNA processing and 30S ribosomal subunit biogenesis and possibly also in cell cycle regulation and energy metabolism. The protein is GTPase Era of Geotalea uraniireducens (strain Rf4) (Geobacter uraniireducens).